A 447-amino-acid polypeptide reads, in one-letter code: Phosphoglucosamine mutase (447 aa).

S103 functions as the Phosphoserine intermediate in the catalytic mechanism. Positions 103, 242, 244, and 246 each coordinate Mg(2+). Residue S103 is modified to Phosphoserine.

It belongs to the phosphohexose mutase family. Mg(2+) serves as cofactor. Post-translationally, activated by phosphorylation.

The catalysed reaction is alpha-D-glucosamine 1-phosphate = D-glucosamine 6-phosphate. Functionally, catalyzes the conversion of glucosamine-6-phosphate to glucosamine-1-phosphate. In Jannaschia sp. (strain CCS1), this protein is Phosphoglucosamine mutase.